The chain runs to 70 residues: Protein SlyX homolog (70 aa).

This sequence belongs to the SlyX family.

This chain is Protein SlyX homolog, found in Shewanella putrefaciens (strain CN-32 / ATCC BAA-453).